Reading from the N-terminus, the 1543-residue chain is ATP-binding cassette sub-family A member 10 (1543 aa).

7 helical membrane-spanning segments follow: residues 83–103 (YWLK…IEVT), 135–155 (WFHF…SLNV), 185–205 (ICFI…IPIV), 210–230 (FMVI…LAFL), 240–260 (LAGL…FTVL), 264–284 (LPLS…TAGM), and 310–330 (IATF…TLYF). One can recognise an ABC transporter 1 domain in the interval 391–626 (IRIRNVIKEY…WGIGYHLSLH (236 aa)). Residue 427-434 (GHNGAGKS) coordinates ATP. A run of 8 helical transmembrane segments spans residues 774-794 (LLCL…EKIM), 890-910 (LNCF…IFNF), 926-946 (IVLD…TNCV), 985-1005 (IPLY…IFLG), 1014-1034 (FVLV…TYVL), 1046-1066 (GFWS…MVST), 1073-1093 (LILC…MLLI), and 1113-1133 (KTIL…LFVI). The segment covering 1153 to 1164 (ISPRSRETHPNP) has biased composition (basic and acidic residues). The segment at 1153–1177 (ISPRSRETHPNPEEPEEEDEDVQAE) is disordered. Residues 1165–1174 (EEPEEEDEDV) show a composition bias toward acidic residues. The 235-residue stretch at 1206–1440 (YETKKSCFST…FGRDYLLEIK (235 aa)) folds into the ABC transporter 2 domain. 1239–1246 (GHNGAGKS) contacts ATP.

It belongs to the ABC transporter superfamily. ABCA family. Widely expressed. Highly expressed in skeletal muscle, heart, brain and gastrointestinal tract.

The protein localises to the membrane. In terms of biological role, probable transporter which may play a role in macrophage lipid transport and homeostasis. The chain is ATP-binding cassette sub-family A member 10 (ABCA10) from Homo sapiens (Human).